Reading from the N-terminus, the 866-residue chain is Sphingomyelin phosphodiesterase 4 (866 aa).

A phosphoserine mark is found at serine 169 and serine 285. Threonine 708 is subject to Phosphothreonine. A Phosphoserine modification is found at serine 792. A helical transmembrane segment spans residues 822–842 (LLLAFFVASLFCVGPLPCTLL).

The cofactor is Mg(2+). Widely expressed, with highest levels in heart and skeletal muscle. In terms of tissue distribution, expressed in skeletal muscle (at protein level). As to expression, expressed in skeletal muscle but a lower levels than isoform 1 (at protein level).

Its subcellular location is the endoplasmic reticulum membrane. The protein resides in the golgi apparatus membrane. The protein localises to the nucleus envelope. It is found in the cell membrane. It localises to the sarcolemma. The enzyme catalyses a sphingomyelin + H2O = phosphocholine + an N-acylsphing-4-enine + H(+). Activated by phosphatidylserine and tumor necrosis factor (TNF). Inhibited by scyphostatin. Functionally, catalyzes the hydrolysis of membrane sphingomyelin to form phosphorylcholine and ceramide. It has a relevant role in the homeostasis of membrane sphingolipids, thereby influencing membrane integrity, and endoplasmic reticulum organization and function. May sensitize cells to DNA damage-induced apoptosis. In skeletal muscle, mediates TNF-stimulated oxidant production. The sequence is that of Sphingomyelin phosphodiesterase 4 from Homo sapiens (Human).